A 275-amino-acid chain; its full sequence is NH(3)-dependent NAD(+) synthetase (275 aa).

46 to 53 (GISGGQDS) contributes to the ATP binding site. Asp-52 contributes to the Mg(2+) binding site. A deamido-NAD(+)-binding site is contributed by Arg-140. Thr-160 serves as a coordination point for ATP. A Mg(2+)-binding site is contributed by Glu-165. Deamido-NAD(+)-binding residues include Lys-173 and Asp-180. Residues Lys-189 and Thr-211 each coordinate ATP. 260–261 (HK) serves as a coordination point for deamido-NAD(+).

It belongs to the NAD synthetase family. Homodimer.

The enzyme catalyses deamido-NAD(+) + NH4(+) + ATP = AMP + diphosphate + NAD(+) + H(+). It participates in cofactor biosynthesis; NAD(+) biosynthesis; NAD(+) from deamido-NAD(+) (ammonia route): step 1/1. In terms of biological role, catalyzes the ATP-dependent amidation of deamido-NAD to form NAD. Uses ammonia as a nitrogen source. This chain is NH(3)-dependent NAD(+) synthetase, found in Shigella dysenteriae serotype 1 (strain Sd197).